A 402-amino-acid polypeptide reads, in one-letter code: CCA-adding enzyme (402 aa).

ATP contacts are provided by G32 and R35. Residues G32 and R35 each contribute to the CTP site. 2 residues coordinate Mg(2+): D45 and D47. Residues R116, D159, R162, R165, and R168 each coordinate ATP. Residues R116, D159, R162, R165, and R168 each contribute to the CTP site.

This sequence belongs to the tRNA nucleotidyltransferase/poly(A) polymerase family. Bacterial CCA-adding enzyme type 3 subfamily. In terms of assembly, homodimer. It depends on Mg(2+) as a cofactor.

The catalysed reaction is a tRNA precursor + 2 CTP + ATP = a tRNA with a 3' CCA end + 3 diphosphate. The enzyme catalyses a tRNA with a 3' CCA end + 2 CTP + ATP = a tRNA with a 3' CCACCA end + 3 diphosphate. Functionally, catalyzes the addition and repair of the essential 3'-terminal CCA sequence in tRNAs without using a nucleic acid template. Adds these three nucleotides in the order of C, C, and A to the tRNA nucleotide-73, using CTP and ATP as substrates and producing inorganic pyrophosphate. tRNA 3'-terminal CCA addition is required both for tRNA processing and repair. Also involved in tRNA surveillance by mediating tandem CCA addition to generate a CCACCA at the 3' terminus of unstable tRNAs. While stable tRNAs receive only 3'-terminal CCA, unstable tRNAs are marked with CCACCA and rapidly degraded. This is CCA-adding enzyme from Streptococcus pyogenes serotype M2 (strain MGAS10270).